A 218-amino-acid polypeptide reads, in one-letter code: MTQDEMKKAAGWAALEYVEKDSIVGVGTGSTVNHFIDALATMKAEIEGAVSSSEASTQKMKDLGIPVFDLNSVDELSVYVDGADEINAHMDMIKGGGAALTREKIVAAVADKFICIVDNTKQVDVLGEFPLPVEVIPMARSYVARQLVKLGGDPVYREGVITDNGNIILDVYNMKIVNPKELEQQINKIVGVVTNGLFANRGADVLLVGSPDGVKTLK.

Substrate-binding positions include 28 to 31 (TGST), 81 to 84 (DGAD), and 94 to 97 (KGGG). E103 acts as the Proton acceptor in catalysis. K121 provides a ligand contact to substrate.

The protein belongs to the ribose 5-phosphate isomerase family. As to quaternary structure, homodimer.

It carries out the reaction aldehydo-D-ribose 5-phosphate = D-ribulose 5-phosphate. It functions in the pathway carbohydrate degradation; pentose phosphate pathway; D-ribose 5-phosphate from D-ribulose 5-phosphate (non-oxidative stage): step 1/1. In terms of biological role, catalyzes the reversible conversion of ribose-5-phosphate to ribulose 5-phosphate. The protein is Ribose-5-phosphate isomerase A of Shewanella woodyi (strain ATCC 51908 / MS32).